A 382-amino-acid polypeptide reads, in one-letter code: Acetylxylan esterase A (382 aa).

A signal peptide spans 1–21 (MKSLSFSFLVTLFLYLTLSSA). Residues 22-31 (RTLGKDVNKR) constitute a propeptide that is removed on maturation. Residues 35 to 307 (GSLQQVTGFG…GAKDMEWFGF (273 aa)) are catalytic. Asparagine 46 carries N-linked (GlcNAc...) asparagine glycosylation. The active-site Charge relay system is the serine 152. N-linked (GlcNAc...) asparagine glycosylation is present at asparagine 194. Residues 308-345 (SGSGSSSTTTASATKTSTTSTTSTKTTSSTSSTTTSST) form a ser/Thr-rich linker region. Low complexity predominate over residues 313 to 345 (SSTTTASATKTSTTSTTSTKTTSSTSSTTTSST). A disordered region spans residues 313–346 (SSTTTASATKTSTTSTTSTKTTSSTSSTTTSSTG). One can recognise a CBM1 domain in the interval 346–382 (GVAAHWGQCGGSGWTGPTVCESGYTCTYSNAWYSQCL).

Belongs to the carbohydrate esterase 1 (CE1) family. AxeA subfamily. As to quaternary structure, monomer. Glycosylated.

The protein localises to the secreted. The enzyme catalyses Deacetylation of xylans and xylo-oligosaccharides.. The protein operates within glycan degradation; xylan degradation. Its activity is regulated as follows. Inactivated by phenylmethylsulfonylfluorid (PMSF), a specific inhibitor of serine esterases. In terms of biological role, acetylxylan esterase involved in the hydrolysis of xylan, a major structural heterogeneous polysaccharide found in plant biomass representing the second most abundant polysaccharide in the biosphere, after cellulose. Degrades acetylated xylans by cleaving acetyl side groups from the hetero-xylan backbone. The polypeptide is Acetylxylan esterase A (axeA) (Talaromyces purpureogenus (Soft rot fungus)).